The following is a 159-amino-acid chain: H/ACA ribonucleoprotein complex subunit 2-like protein (159 aa).

The interval 1–28 (MAKTPKKDKTEEKEEHEESGGNKEDRER) is disordered.

Belongs to the eukaryotic ribosomal protein eL8 family. As to quaternary structure, component of the small nucleolar ribonucleoprotein particle containing H/ACA-type snoRNAs (H/ACA snoRNPs). Component of the telomerase holoenzyme complex.

It is found in the nucleus. The protein resides in the nucleolus. Functionally, required for ribosome biogenesis. Part of a complex which catalyzes pseudouridylation of rRNA. This involves the isomerization of uridine such that the ribose is subsequently attached to C5, instead of the normal N1. Pseudouridine ('psi') residues may serve to stabilize the conformation of rRNAs. This Branchiostoma belcheri (Amphioxus) protein is H/ACA ribonucleoprotein complex subunit 2-like protein.